Consider the following 372-residue polypeptide: Queuine tRNA-ribosyltransferase (372 aa).

The Proton acceptor role is filled by Asp92. Residues Asp92–Tyr96, Asp146, Gln188, and Gly215 each bind substrate. Residues Gly246–Glu252 are RNA binding. The active-site Nucleophile is the Asp265. Positions Thr270–Arg274 are RNA binding; important for wobble base 34 recognition. The Zn(2+) site is built by Cys303, Cys305, Cys308, and His334.

The protein belongs to the queuine tRNA-ribosyltransferase family. As to quaternary structure, homodimer. Within each dimer, one monomer is responsible for RNA recognition and catalysis, while the other monomer binds to the replacement base PreQ1. The cofactor is Zn(2+).

It carries out the reaction 7-aminomethyl-7-carbaguanine + guanosine(34) in tRNA = 7-aminomethyl-7-carbaguanosine(34) in tRNA + guanine. The protein operates within tRNA modification; tRNA-queuosine biosynthesis. Catalyzes the base-exchange of a guanine (G) residue with the queuine precursor 7-aminomethyl-7-deazaguanine (PreQ1) at position 34 (anticodon wobble position) in tRNAs with GU(N) anticodons (tRNA-Asp, -Asn, -His and -Tyr). Catalysis occurs through a double-displacement mechanism. The nucleophile active site attacks the C1' of nucleotide 34 to detach the guanine base from the RNA, forming a covalent enzyme-RNA intermediate. The proton acceptor active site deprotonates the incoming PreQ1, allowing a nucleophilic attack on the C1' of the ribose to form the product. After dissociation, two additional enzymatic reactions on the tRNA convert PreQ1 to queuine (Q), resulting in the hypermodified nucleoside queuosine (7-(((4,5-cis-dihydroxy-2-cyclopenten-1-yl)amino)methyl)-7-deazaguanosine). This chain is Queuine tRNA-ribosyltransferase, found in Prochlorococcus marinus (strain MIT 9211).